A 623-amino-acid chain; its full sequence is E3 ubiquitin-protein ligase ORTHRUS 5 (623 aa).

The PHD-type zinc finger occupies 12–62 (DGVCMRCQVNPPSEETLTCGTCVTPWHVSCLLPESLASSTGDWECPDCSGV). Residues 129 to 169 (CSICIQLPERPVTTPCGHNFCLKCFEKWAVGQGKLTCMICR) form an RING-type 1 zinc finger. Positions 258–407 (TRNQGVLVGE…HKMCRYLFVR (150 aa)) constitute a YDG domain. The RING-type 2 zinc-finger motif lies at 498–555 (CQICRKVLSLPVTTPCAHNFCKACLEAKFAGITQLRDRSNGVRKLRAKKNIMTCPCCT). Residues 580–623 (KSEEEAEVAESSNISEEEGEEESEPPTKKIKMDKNSVGGTSLSA) form a disordered region. A compositionally biased stretch (acidic residues) spans 594–603 (SEEEGEEESE). Positions 604-613 (PPTKKIKMDK) are enriched in basic and acidic residues.

In terms of tissue distribution, expressed in inflorescences.

The protein resides in the nucleus. The catalysed reaction is S-ubiquitinyl-[E2 ubiquitin-conjugating enzyme]-L-cysteine + [acceptor protein]-L-lysine = [E2 ubiquitin-conjugating enzyme]-L-cysteine + N(6)-ubiquitinyl-[acceptor protein]-L-lysine.. The protein operates within protein modification; protein ubiquitination. Its function is as follows. E3 ubiquitin-protein ligase. Participates in CpG methylation-dependent transcriptional regulation and epigenetic transcriptional silencing. Mediates ubiquitination with the E2 ubiquitin-conjugating enzyme UBC11. This chain is E3 ubiquitin-protein ligase ORTHRUS 5 (ORTH5), found in Arabidopsis thaliana (Mouse-ear cress).